The chain runs to 520 residues: ATP synthase subunit alpha (520 aa).

G169–T176 lines the ATP pocket.

This sequence belongs to the ATPase alpha/beta chains family. As to quaternary structure, F-type ATPases have 2 components, CF(1) - the catalytic core - and CF(0) - the membrane proton channel. CF(1) has five subunits: alpha(3), beta(3), gamma(1), delta(1), epsilon(1). CF(0) has three main subunits: a(1), b(2) and c(9-12). The alpha and beta chains form an alternating ring which encloses part of the gamma chain. CF(1) is attached to CF(0) by a central stalk formed by the gamma and epsilon chains, while a peripheral stalk is formed by the delta and b chains.

It is found in the cell membrane. It carries out the reaction ATP + H2O + 4 H(+)(in) = ADP + phosphate + 5 H(+)(out). Functionally, produces ATP from ADP in the presence of a proton gradient across the membrane. The alpha chain is a regulatory subunit. The protein is ATP synthase subunit alpha of Oenococcus oeni (strain ATCC BAA-331 / PSU-1).